Consider the following 260-residue polypeptide: Phosphatidylglycerol--prolipoprotein diacylglyceryl transferase (260 aa).

3 helical membrane passes run 16-36, 55-75, and 87-107; these read LEFR…YFIV, VIFS…ILFY, and LFAV…VILA. R138 contributes to the a 1,2-diacyl-sn-glycero-3-phospho-(1'-sn-glycerol) binding site. Helical transmembrane passes span 198–218 and 232–252; these read GVVF…VEFF and FSMG…MAVL.

Belongs to the Lgt family.

It localises to the cell inner membrane. The catalysed reaction is L-cysteinyl-[prolipoprotein] + a 1,2-diacyl-sn-glycero-3-phospho-(1'-sn-glycerol) = an S-1,2-diacyl-sn-glyceryl-L-cysteinyl-[prolipoprotein] + sn-glycerol 1-phosphate + H(+). It participates in protein modification; lipoprotein biosynthesis (diacylglyceryl transfer). Its function is as follows. Catalyzes the transfer of the diacylglyceryl group from phosphatidylglycerol to the sulfhydryl group of the N-terminal cysteine of a prolipoprotein, the first step in the formation of mature lipoproteins. The protein is Phosphatidylglycerol--prolipoprotein diacylglyceryl transferase of Geobacter sulfurreducens (strain ATCC 51573 / DSM 12127 / PCA).